Here is a 145-residue protein sequence, read N- to C-terminus: MKVTMALAALCVALQAPCIGSESTPSNLNNRHLRHEHDSNTPLQRRDEALVPAHRVYDPVSGLACSLVGKCMVCPTSEKDESYCRETGYRQELDCPRVEDDVVHTKSVNQRTTRFRPCSFAEPARPGVAFVKFEVGNLRTLLQKL.

Residues 1–20 (MKVTMALAALCVALQAPCIG) form the signal peptide. The short motif at 31–34 (RHLR) is the RxLR element.

It belongs to the RxLR effector family.

It localises to the secreted. It is found in the host nucleus. The protein localises to the host cytoplasm. Functionally, secreted effector that completely suppresses the host cell death induced by cell death-inducing proteins. This Plasmopara viticola (Downy mildew of grapevine) protein is Secreted RxLR effector protein 43.